A 162-amino-acid chain; its full sequence is Probable metalloprotease y4jG (162 aa).

Residues 9–147 (TVALPRDCVS…YRLDAKANWN (139 aa)) enclose the MPN domain. Zn(2+)-binding residues include His94, His96, and Asp107.

It belongs to the peptidase M67B family.

The chain is Probable metalloprotease y4jG from Sinorhizobium fredii (strain NBRC 101917 / NGR234).